A 362-amino-acid polypeptide reads, in one-letter code: MKESLRLRLDQLCDRHEELTALLADAEVISDNKRFRKLSREHSDLNEIVDVWSKYRQAEEDIETAESMLSDPDFKDMAQEEIKENRALIEQLEGDLNILMIPKDPNDANAAYLEVRAGTGGDEAAIFSGDLFRMYSKYAESRGWRIEVLSENEGEHGGYKEVICRVDGDGVYGRLKFESGAHRVQRVPATESQGRVHTSACTVAILPEVDVDTTVEINPADLRIDTYRASGAGGQHINKTDSAVRITHVPTGVVVECQEERSQHKNKAKAMALLVSRLENAKRAAQETATSEMRRDLVGSGDRSERIRTYNYPQGRMTDHRINLTLYKLDAIMEGDLTELLDSLHREYQADQLAMLAQENGG.

N5-methylglutamine is present on glutamine 235.

It belongs to the prokaryotic/mitochondrial release factor family. Methylated by PrmC. Methylation increases the termination efficiency of RF1.

The protein localises to the cytoplasm. Peptide chain release factor 1 directs the termination of translation in response to the peptide chain termination codons UAG and UAA. The sequence is that of Peptide chain release factor 1 from Acinetobacter baylyi (strain ATCC 33305 / BD413 / ADP1).